Reading from the N-terminus, the 422-residue chain is Ribonuclease Y (422 aa).

The KH domain maps to T112–L172. The HD domain occupies V238–S331.

This sequence belongs to the RNase Y family.

Functionally, endoribonuclease that initiates mRNA decay. The polypeptide is Ribonuclease Y (Mycoplasma mycoides).